A 398-amino-acid polypeptide reads, in one-letter code: Phosphoglycerate kinase (398 aa).

Residues 23–25 (DFN), Arg38, 61–64 (HMGK), Arg122, and Arg155 contribute to the substrate site. Residues Lys206, Gly297, Glu328, and 354-357 (GGDS) each bind ATP.

It belongs to the phosphoglycerate kinase family. In terms of assembly, monomer.

The protein resides in the cytoplasm. The enzyme catalyses (2R)-3-phosphoglycerate + ATP = (2R)-3-phospho-glyceroyl phosphate + ADP. It functions in the pathway carbohydrate degradation; glycolysis; pyruvate from D-glyceraldehyde 3-phosphate: step 2/5. The sequence is that of Phosphoglycerate kinase from Clostridium botulinum (strain Okra / Type B1).